A 625-amino-acid polypeptide reads, in one-letter code: Dual specificity protein phosphatase 8 (625 aa).

Residues 23 to 138 (GPGGPLVIDS…FSSCFPGLCE (116 aa)) enclose the Rhodanese domain. The region spanning 160 to 302 (GLTRILPHLY…LLEYERSLKL (143 aa)) is the Tyrosine-protein phosphatase domain. The active-site Phosphocysteine intermediate is the Cys246. Residues 306 to 586 (LQGDPGTPSG…PAPETQFKRR (281 aa)) form a disordered region. The segment covering 380–389 (SSDRLQDTNR) has biased composition (basic and acidic residues). A compositionally biased stretch (low complexity) spans 431–448 (AALGLSSPSPDSPDAAPE). Over residues 555–570 (DLRRREAARAEPRDAR) the composition is skewed to basic and acidic residues.

Belongs to the protein-tyrosine phosphatase family. Non-receptor class dual specificity subfamily. In terms of assembly, monomer. In terms of tissue distribution, abundant in brain, heart and skeletal muscle.

Its subcellular location is the cytoplasm. The protein localises to the nucleus. The enzyme catalyses O-phospho-L-tyrosyl-[protein] + H2O = L-tyrosyl-[protein] + phosphate. It carries out the reaction O-phospho-L-seryl-[protein] + H2O = L-seryl-[protein] + phosphate. It catalyses the reaction O-phospho-L-threonyl-[protein] + H2O = L-threonyl-[protein] + phosphate. Functionally, has phosphatase activity with synthetic phosphatase substrates and negatively regulates mitogen-activated protein kinase activity, presumably by catalysing their dephosphorylation. Expected to display protein phosphatase activity toward phosphotyrosine, phosphoserine and phosphothreonine residues. The sequence is that of Dual specificity protein phosphatase 8 (DUSP8) from Homo sapiens (Human).